A 422-amino-acid polypeptide reads, in one-letter code: Proline-rich protein 22 (422 aa).

3 disordered regions span residues 1-35 (MQHP…PAPT), 306-325 (LCEV…SADD), and 363-422 (EEQP…ATPH). The span at 383-400 (GKRKASTAKKGKPGRKAR) shows a compositional bias: basic residues. A compositionally biased stretch (basic and acidic residues) spans 413 to 422 (PREDLGATPH).

This Homo sapiens (Human) protein is Proline-rich protein 22 (PRR22).